Consider the following 517-residue polypeptide: Ribonuclease Y (517 aa).

A helical transmembrane segment spans residues 1–21 (MIESLIALIAAIVGLGIGYLV). The 67-residue stretch at 207 to 273 (LINVINIKND…TKVIELLVED (67 aa)) folds into the KH domain. The region spanning 333–426 (ALAHSLEVAH…VCAADTLSAA (94 aa)) is the HD domain.

This sequence belongs to the RNase Y family.

The protein resides in the cell membrane. Endoribonuclease that initiates mRNA decay. The polypeptide is Ribonuclease Y (Campylobacter jejuni subsp. jejuni serotype O:2 (strain ATCC 700819 / NCTC 11168)).